The sequence spans 414 residues: Na(+)-translocating NADH-quinone reductase subunit B (414 aa).

4 helical membrane-spanning segments follow: residues 23 to 40 (WFAL…PGLV), 56 to 76 (IMIM…YNAG), 129 to 149 (FLPI…LFCM), and 164 to 184 (ILFA…LGIT). Residue threonine 236 is modified to FMN phosphoryl threonine. 5 helical membrane-spanning segments follow: residues 268–288 (IPGS…AMIV), 297–317 (IIAG…VIGS), 322–342 (MFSM…GMFF), 358–378 (WWYG…NPAY), and 381–401 (GMML…HLVV).

It belongs to the NqrB/RnfD family. As to quaternary structure, composed of six subunits; NqrA, NqrB, NqrC, NqrD, NqrE and NqrF. The cofactor is FMN.

It is found in the cell inner membrane. It carries out the reaction a ubiquinone + n Na(+)(in) + NADH + H(+) = a ubiquinol + n Na(+)(out) + NAD(+). Functionally, NQR complex catalyzes the reduction of ubiquinone-1 to ubiquinol by two successive reactions, coupled with the transport of Na(+) ions from the cytoplasm to the periplasm. NqrA to NqrE are probably involved in the second step, the conversion of ubisemiquinone to ubiquinol. In Vibrio vulnificus (strain CMCP6), this protein is Na(+)-translocating NADH-quinone reductase subunit B.